The primary structure comprises 120 residues: UPF0231 protein Ent638_0667 (120 aa).

This sequence belongs to the UPF0231 family.

The sequence is that of UPF0231 protein Ent638_0667 from Enterobacter sp. (strain 638).